A 381-amino-acid polypeptide reads, in one-letter code: Putative glycosyltransferase EpsD (381 aa).

It belongs to the glycosyltransferase group 1 family. Glycosyltransferase 4 subfamily.

May be involved in the production of the exopolysaccharide (EPS) component of the extracellular matrix during biofilm formation. EPS is responsible for the adhesion of chains of cells into bundles. Required for biofilm maintenance. The chain is Putative glycosyltransferase EpsD (epsD) from Bacillus subtilis (strain 168).